Here is a 533-residue protein sequence, read N- to C-terminus: Chromosomal replication initiator protein DnaA (533 aa).

The domain I, interacts with DnaA modulators stretch occupies residues 1–72 (MNDFWQHCSA…DLARDFWNAP (72 aa)). Residues 72 to 196 (PIEVQFVLDP…EAADSMYERS (125 aa)) form a domain II region. Positions 83 to 110 (AGQRSPAGATPLAPRAPLPSANPAPVGP) are disordered. A compositionally biased stretch (pro residues) spans 96-110 (PRAPLPSANPAPVGP). The interval 197-413 (KLNPVLTFDN…GALRKILAYS (217 aa)) is domain III, AAA+ region. The ATP site is built by Gly-241, Gly-243, Lys-244, and Thr-245. Residues 414-533 (KFHGREITIE…LHVLEQTLKG (120 aa)) are domain IV, binds dsDNA.

The protein belongs to the DnaA family. As to quaternary structure, oligomerizes as a right-handed, spiral filament on DNA at oriC.

Its subcellular location is the cytoplasm. Functionally, plays an essential role in the initiation and regulation of chromosomal replication. ATP-DnaA binds to the origin of replication (oriC) to initiate formation of the DNA replication initiation complex once per cell cycle. Binds the DnaA box (a 9 base pair repeat at the origin) and separates the double-stranded (ds)DNA. Forms a right-handed helical filament on oriC DNA; dsDNA binds to the exterior of the filament while single-stranded (ss)DNA is stabiized in the filament's interior. The ATP-DnaA-oriC complex binds and stabilizes one strand of the AT-rich DNA unwinding element (DUE), permitting loading of DNA polymerase. After initiation quickly degrades to an ADP-DnaA complex that is not apt for DNA replication. Binds acidic phospholipids. The polypeptide is Chromosomal replication initiator protein DnaA (Burkholderia mallei (strain NCTC 10247)).